We begin with the raw amino-acid sequence, 101 residues long: Small ribosomal subunit protein uS14 (101 aa).

This sequence belongs to the universal ribosomal protein uS14 family. Part of the 30S ribosomal subunit. Contacts proteins S3 and S10.

In terms of biological role, binds 16S rRNA, required for the assembly of 30S particles and may also be responsible for determining the conformation of the 16S rRNA at the A site. This Salmonella schwarzengrund (strain CVM19633) protein is Small ribosomal subunit protein uS14.